A 76-amino-acid polypeptide reads, in one-letter code: Protein RALF-like 30 (76 aa).

An N-terminal signal peptide occupies residues 1-22 (MKAWVICLMVISIFMMIEPTLA). Intrachain disulfides connect cysteine 37-cysteine 46 and cysteine 66-cysteine 72.

This sequence belongs to the plant rapid alkalinization factor (RALF) family.

The protein resides in the secreted. Cell signaling peptide that may regulate plant stress, growth, and development. Mediates a rapid alkalinization of extracellular space by mediating a transient increase in the cytoplasmic Ca(2+) concentration leading to a calcium-dependent signaling events through a cell surface receptor and a concomitant activation of some intracellular mitogen-activated protein kinases. This chain is Protein RALF-like 30 (RALFL30), found in Arabidopsis thaliana (Mouse-ear cress).